Here is an 87-residue protein sequence, read N- to C-terminus: Cell division topological specificity factor (87 aa).

This sequence belongs to the MinE family.

Functionally, prevents the cell division inhibition by proteins MinC and MinD at internal division sites while permitting inhibition at polar sites. This ensures cell division at the proper site by restricting the formation of a division septum at the midpoint of the long axis of the cell. The chain is Cell division topological specificity factor from Vibrio vulnificus (strain CMCP6).